We begin with the raw amino-acid sequence, 178 residues long: Large ribosomal subunit protein uL6 (178 aa).

The protein belongs to the universal ribosomal protein uL6 family. As to quaternary structure, part of the 50S ribosomal subunit.

Functionally, this protein binds to the 23S rRNA, and is important in its secondary structure. It is located near the subunit interface in the base of the L7/L12 stalk, and near the tRNA binding site of the peptidyltransferase center. In Campylobacter hominis (strain ATCC BAA-381 / DSM 21671 / CCUG 45161 / LMG 19568 / NCTC 13146 / CH001A), this protein is Large ribosomal subunit protein uL6.